Consider the following 292-residue polypeptide: ATP synthase gamma chain (292 aa).

This sequence belongs to the ATPase gamma chain family. In terms of assembly, F-type ATPases have 2 components, CF(1) - the catalytic core - and CF(0) - the membrane proton channel. CF(1) has five subunits: alpha(3), beta(3), gamma(1), delta(1), epsilon(1). CF(0) has three main subunits: a, b and c.

It localises to the cell inner membrane. Produces ATP from ADP in the presence of a proton gradient across the membrane. The gamma chain is believed to be important in regulating ATPase activity and the flow of protons through the CF(0) complex. The protein is ATP synthase gamma chain of Brucella canis (strain ATCC 23365 / NCTC 10854 / RM-666).